We begin with the raw amino-acid sequence, 229 residues long: GTP:AMP phosphotransferase (229 aa).

10–15 contributes to the a ribonucleoside 5'-triphosphate binding site; sequence GVGKGT. Positions 30 to 59 are NMP; sequence NVGNILRNEIKKESNIGKEVQNVVRSGNLV. AMP-binding positions include R36, 57–59, G87, 87–90, and Q94; these read NLV and GFPR. The LID stretch occupies residues 123–170; sequence GRRICNICDKNFNVSNIQQDSFDMPPILPSKDCIQCNGHTNLIKRKDD. R178 contacts AMP.

This sequence belongs to the adenylate kinase family.

The protein resides in the mitochondrion. It carries out the reaction a ribonucleoside 5'-triphosphate + AMP = a ribonucleoside 5'-diphosphate + ADP. It catalyses the reaction GTP + AMP = GDP + ADP. Its activity is regulated as follows. Inhibited by the dinucleoside pentaphosphate compound P1,P5-di(guanosine-5') pentaphosphate (GP5A). Catalyzes the reversible transfer of the terminal phosphate group between GTP and AMP. Has very low activity with UTP, ITP, CTP and IMP and no activity with ATP, GMP, CMP and UMP in vitro. This is GTP:AMP phosphotransferase from Plasmodium falciparum (isolate 3D7).